A 454-amino-acid chain; its full sequence is tRNA modification GTPase MnmE (454 aa).

3 residues coordinate (6S)-5-formyl-5,6,7,8-tetrahydrofolate: arginine 23, glutamate 80, and lysine 120. The TrmE-type G domain maps to 216–377 (GMKVVIAGRP…LRDHLKQSMG (162 aa)). Asparagine 226 is a K(+) binding site. GTP contacts are provided by residues 226 to 231 (NAGKSS), 245 to 251 (TDIAGTT), 270 to 273 (DTAG), 335 to 338 (NKAD), and 358 to 360 (SAR). Serine 230 lines the Mg(2+) pocket. Residues threonine 245, isoleucine 247, and threonine 250 each coordinate K(+). A Mg(2+)-binding site is contributed by threonine 251. (6S)-5-formyl-5,6,7,8-tetrahydrofolate is bound at residue lysine 454.

The protein belongs to the TRAFAC class TrmE-Era-EngA-EngB-Septin-like GTPase superfamily. TrmE GTPase family. As to quaternary structure, homodimer. Heterotetramer of two MnmE and two MnmG subunits. K(+) is required as a cofactor.

It is found in the cytoplasm. Functionally, exhibits a very high intrinsic GTPase hydrolysis rate. Involved in the addition of a carboxymethylaminomethyl (cmnm) group at the wobble position (U34) of certain tRNAs, forming tRNA-cmnm(5)s(2)U34. The polypeptide is tRNA modification GTPase MnmE (Yersinia pseudotuberculosis serotype O:3 (strain YPIII)).